Here is a 478-residue protein sequence, read N- to C-terminus: Protein nucleotidyltransferase YdiU (478 aa).

Residues Gly84, Gly86, Arg87, Lys107, Asp119, Gly120, Arg170, and Arg177 each coordinate ATP. Asp246 acts as the Proton acceptor in catalysis. Residues Asn247 and Asp256 each contribute to the Mg(2+) site. Asp256 is an ATP binding site.

Belongs to the SELO family. The cofactor is Mg(2+). Mn(2+) is required as a cofactor.

It carries out the reaction L-seryl-[protein] + ATP = 3-O-(5'-adenylyl)-L-seryl-[protein] + diphosphate. The enzyme catalyses L-threonyl-[protein] + ATP = 3-O-(5'-adenylyl)-L-threonyl-[protein] + diphosphate. The catalysed reaction is L-tyrosyl-[protein] + ATP = O-(5'-adenylyl)-L-tyrosyl-[protein] + diphosphate. It catalyses the reaction L-histidyl-[protein] + UTP = N(tele)-(5'-uridylyl)-L-histidyl-[protein] + diphosphate. It carries out the reaction L-seryl-[protein] + UTP = O-(5'-uridylyl)-L-seryl-[protein] + diphosphate. The enzyme catalyses L-tyrosyl-[protein] + UTP = O-(5'-uridylyl)-L-tyrosyl-[protein] + diphosphate. In terms of biological role, nucleotidyltransferase involved in the post-translational modification of proteins. It can catalyze the addition of adenosine monophosphate (AMP) or uridine monophosphate (UMP) to a protein, resulting in modifications known as AMPylation and UMPylation. The protein is Protein nucleotidyltransferase YdiU of Escherichia coli O17:K52:H18 (strain UMN026 / ExPEC).